A 275-amino-acid chain; its full sequence is 4-hydroxy-tetrahydrodipicolinate reductase (275 aa).

Residues 13 to 18 (GAAGKM) and 108 to 110 (GTT) contribute to the NAD(+) site. His164 acts as the Proton donor/acceptor in catalysis. His165 is a binding site for (S)-2,3,4,5-tetrahydrodipicolinate. Residue Lys168 is the Proton donor of the active site. 174–175 (GT) is a (S)-2,3,4,5-tetrahydrodipicolinate binding site.

This sequence belongs to the DapB family.

Its subcellular location is the cytoplasm. It carries out the reaction (S)-2,3,4,5-tetrahydrodipicolinate + NAD(+) + H2O = (2S,4S)-4-hydroxy-2,3,4,5-tetrahydrodipicolinate + NADH + H(+). The catalysed reaction is (S)-2,3,4,5-tetrahydrodipicolinate + NADP(+) + H2O = (2S,4S)-4-hydroxy-2,3,4,5-tetrahydrodipicolinate + NADPH + H(+). Its pathway is amino-acid biosynthesis; L-lysine biosynthesis via DAP pathway; (S)-tetrahydrodipicolinate from L-aspartate: step 4/4. Catalyzes the conversion of 4-hydroxy-tetrahydrodipicolinate (HTPA) to tetrahydrodipicolinate. The sequence is that of 4-hydroxy-tetrahydrodipicolinate reductase from Acaryochloris marina (strain MBIC 11017).